A 264-amino-acid chain; its full sequence is uncharacterized protein (264 aa).

An ATP-binding site is contributed by 8 to 15 (IQGGTGKT).

This is an uncharacterized protein from Methanocaldococcus jannaschii (strain ATCC 43067 / DSM 2661 / JAL-1 / JCM 10045 / NBRC 100440) (Methanococcus jannaschii).